Consider the following 548-residue polypeptide: WEB family protein At1g12150 (548 aa).

The stretch at 71–544 (KEFMKIKQKL…ELQRWRQQEN (474 aa)) forms a coiled coil. Residues 430–448 (VREEMKMISQKQESKKQDE) are compositionally biased toward basic and acidic residues. Residues 430–455 (VREEMKMISQKQESKKQDEESSGSKI) are disordered.

Belongs to the WEB family.

The chain is WEB family protein At1g12150 from Arabidopsis thaliana (Mouse-ear cress).